The sequence spans 295 residues: 4-diphosphocytidyl-2-C-methyl-D-erythritol kinase (295 aa).

Lys22 is an active-site residue. 106 to 116 contacts ATP; the sequence is PAGGGFGGGSS. Residue Asp148 is part of the active site.

It belongs to the GHMP kinase family. IspE subfamily.

The catalysed reaction is 4-CDP-2-C-methyl-D-erythritol + ATP = 4-CDP-2-C-methyl-D-erythritol 2-phosphate + ADP + H(+). It participates in isoprenoid biosynthesis; isopentenyl diphosphate biosynthesis via DXP pathway; isopentenyl diphosphate from 1-deoxy-D-xylulose 5-phosphate: step 3/6. Its function is as follows. Catalyzes the phosphorylation of the position 2 hydroxy group of 4-diphosphocytidyl-2C-methyl-D-erythritol. The protein is 4-diphosphocytidyl-2-C-methyl-D-erythritol kinase of Xanthomonas axonopodis pv. citri (strain 306).